The following is a 108-amino-acid chain: uncharacterized protein (108 aa).

The segment covering 1–12 (MSNQQKQLQLPS) has biased composition (polar residues). Residues 1–22 (MSNQQKQLQLPSASIKKPKEKQ) are disordered.

This is an uncharacterized protein from Dictyostelium discoideum (Social amoeba).